The chain runs to 551 residues: Palmdelphin (551 aa).

Met-1 is modified (N-acetylmethionine). The stretch at 12 to 106 (QAITDKRKIQ…LQISANEEVI (95 aa)) forms a coiled coil. A Glycyl lysine isopeptide (Lys-Gly) (interchain with G-Cter in SUMO2) cross-link involves residue Lys-125. Residues Ser-135 and Ser-163 each carry the phosphoserine modification. Lys-178 participates in a covalent cross-link: Glycyl lysine isopeptide (Lys-Gly) (interchain with G-Cter in SUMO1); alternate. Residue Lys-178 forms a Glycyl lysine isopeptide (Lys-Gly) (interchain with G-Cter in SUMO2); alternate linkage. Over residues 247-258 (ERNSKSPTEYHE) the composition is skewed to basic and acidic residues. The tract at residues 247–267 (ERNSKSPTEYHEPVYANPFCR) is disordered. Thr-270 is subject to Phosphothreonine. Disordered stretches follow at residues 298–387 (HESE…CSSP) and 452–536 (EDDE…DPSL). Residues Ser-322, Ser-350, Ser-371, Ser-376, Ser-385, and Ser-386 each carry the phosphoserine modification. Positions 484 to 495 (KRSEVSPHENTN) are enriched in basic and acidic residues. 3 positions are modified to phosphoserine: Ser-498, Ser-515, and Ser-520.

Belongs to the paralemmin family. As to quaternary structure, interacts with GLUL. Post-translationally, phosphorylated. Expressed in the brain and the spinal cord. Expressed in the anterior olfactory nucleus, the olfactory tubercle, the nucleus supraopticus, the nucleus of the lateral olfactory tract, the piriform cortex, the cortico-amygdaloid transition zone, the septofimbrial nucleus and the indusium griseum (at protein level).

It localises to the cytoplasm. The protein resides in the cell projection. Its subcellular location is the dendrite. It is found in the dendritic spine. The chain is Palmdelphin (Palmd) from Rattus norvegicus (Rat).